The sequence spans 174 residues: uncharacterized protein (174 aa).

A run of 2 helical transmembrane segments spans residues 29-51 (FAVE…GFWY) and 66-83 (VIVI…VTKI).

It localises to the cell membrane. This is an uncharacterized protein from Bacillus subtilis (strain 168).